Here is a 681-residue protein sequence, read N- to C-terminus: SRSF protein kinase 2 (681 aa).

Residues 1–63 are disordered; sequence MSVNSEKSSS…EQEDPADYCK (63 aa). Pro residues predominate over residues 22–41; it reads LVPPPPPPPPPPPLPDPAPP. Residues 42–59 show a composition bias toward acidic residues; sequence EPEEEILGSDDEEQEDPA. Serine 50 carries the phosphoserine modification. A Protein kinase domain is found at 79-681; sequence YHVIRKLGWG…ECLRHPWLNS (603 aa). ATP is bound by residues 85 to 93 and lysine 108; that span reads LGWGHFSTV. Aspartate 212 serves as the catalytic Proton acceptor. 3 disordered regions span residues 237-270, 302-452, and 467-499; these read WQKA…KKKL, ENIT…PLFS, and GSPL…KTKT. A phosphothreonine mark is found at threonine 331 and threonine 332. A Phosphoserine modification is found at serine 378. Over residues 395 to 419 the composition is skewed to acidic residues; sequence QLEDEEDDEDDCANPEEYNLDEPNA. Over residues 421-431 the composition is skewed to polar residues; sequence SDYTYSSSYEQ. Serine 468 bears the Phosphoserine mark. Residue threonine 471 is modified to Phosphothreonine. 3 positions are modified to phosphoserine: serine 477, serine 479, and serine 483. Threonine 485 bears the Phosphothreonine; by PKB/AKT1 mark. Residues serine 487 and serine 490 each carry the phosphoserine modification. Serine 581 carries the post-translational modification Phosphoserine; by CK2.

The protein belongs to the protein kinase superfamily. CMGC Ser/Thr protein kinase family. As to quaternary structure, associates with U4/U6-U5 tri-small nuclear ribonucleoproteins (U4/U6-U5 tri-snRNPs). Interacts with PKB/AKT1 in a phosphorylation-dependent manner. The phosphorylated form (by PKB/AKT1) interacts with YWHAB and YWHAE. Interaction with YWHAB suppresses its cleavage by caspases and inhibits the release of its N-terminal pro-apoptotic fragment. Interacts with SFN. Interacts with ACIN1. Interacts with POLR2A/RNA polymerase II; the interaction occurs during the co-transcriptional formation of inappropriate R-loops. It depends on Mg(2+) as a cofactor. Phosphorylation at Thr-485 by PKB/AKT1 enhances its stimulatory activity in triggering cyclin-D1 (CCND1) expression and promoting apoptosis in neurons, which can be blocked by YWHAB. It also enhances its protein kinase activity toward ACIN1 and SRSF2, promotes its nuclear translocation and prevents its proteolytic cleavage. Post-translationally, proteolytically cleaved at Asp-137 and Asp-401 by caspase-3 during apoptotic cell death. Cleavage at Asp-137 which is the major site of cleavage, produces a small N-terminal fragment that translocates into nucleus and promotes VP16-induced apoptosis. In terms of tissue distribution, expressed in testes, lung and brain.

It is found in the cytoplasm. The protein localises to the nucleus. It localises to the nucleoplasm. Its subcellular location is the nucleus speckle. The protein resides in the chromosome. The catalysed reaction is L-seryl-[protein] + ATP = O-phospho-L-seryl-[protein] + ADP + H(+). The enzyme catalyses L-threonyl-[protein] + ATP = O-phospho-L-threonyl-[protein] + ADP + H(+). Its activity is regulated as follows. Activated by phosphorylation on Ser-50 and Ser-581. In terms of biological role, serine/arginine-rich protein-specific kinase which specifically phosphorylates its substrates at serine residues located in regions rich in arginine/serine dipeptides, known as RS domains and is involved in the phosphorylation of SR splicing factors and the regulation of splicing. Promotes neuronal apoptosis by up-regulating cyclin-D1 (CCND1) expression. This is done by the phosphorylation of SRSF2, leading to the suppression of p53/TP53 phosphorylation thereby relieving the repressive effect of p53/TP53 on cyclin-D1 (CCND1) expression. Phosphorylates ACIN1, and redistributes it from the nuclear speckles to the nucleoplasm, resulting in cyclin A1 but not cyclin A2 up-regulation. Plays an essential role in spliceosomal B complex formation via the phosphorylation of DDX23/PRP28. Probably by phosphorylating DDX23, leads to the suppression of incorrect R-loops formed during transcription; R-loops are composed of a DNA:RNA hybrid and the associated non-template single-stranded DNA. The chain is SRSF protein kinase 2 from Mus musculus (Mouse).